The sequence spans 311 residues: Tyrosine recombinase XerC (311 aa).

In terms of domain architecture, Core-binding (CB) spans E14–L100. Positions E121 to R303 constitute a Tyr recombinase domain. Catalysis depends on residues R163, K187, H255, R258, and H281. The O-(3'-phospho-DNA)-tyrosine intermediate role is filled by Y290.

Belongs to the 'phage' integrase family. XerC subfamily. As to quaternary structure, forms a cyclic heterotetrameric complex composed of two molecules of XerC and two molecules of XerD.

The protein resides in the cytoplasm. In terms of biological role, site-specific tyrosine recombinase, which acts by catalyzing the cutting and rejoining of the recombining DNA molecules. The XerC-XerD complex is essential to convert dimers of the bacterial chromosome into monomers to permit their segregation at cell division. It also contributes to the segregational stability of plasmids. In Leptospira interrogans serogroup Icterohaemorrhagiae serovar copenhageni (strain Fiocruz L1-130), this protein is Tyrosine recombinase XerC.